The primary structure comprises 301 residues: Probable alpha-L-glutamate ligase (301 aa).

The ATP-grasp domain maps to L104–E287. Residues K141, E178–Y179, D187, and R211–N213 contribute to the ATP site. Residues D248, E260, and N262 each contribute to the Mg(2+) site. 3 residues coordinate Mn(2+): D248, E260, and N262.

Belongs to the RimK family. It depends on Mg(2+) as a cofactor. Mn(2+) is required as a cofactor.

The protein is Probable alpha-L-glutamate ligase of Saccharophagus degradans (strain 2-40 / ATCC 43961 / DSM 17024).